We begin with the raw amino-acid sequence, 598 residues long: Probable translation initiation factor IF-2 (598 aa).

In terms of domain architecture, tr-type G spans 3-225 (LRCPIVSVLG…GLAQKFLEQK (223 aa)). The segment at 12–19 (GHVDHGKT) is G1. 12 to 19 (GHVDHGKT) is a GTP binding site. The G2 stretch occupies residues 37-41 (GITQH). The interval 76-79 (DTPG) is G3. Residues 76-80 (DTPGH) and 130-133 (NKLD) contribute to the GTP site. The interval 130–133 (NKLD) is G4. The G5 stretch occupies residues 200–202 (SAI).

This sequence belongs to the TRAFAC class translation factor GTPase superfamily. Classic translation factor GTPase family. IF-2 subfamily.

Functionally, function in general translation initiation by promoting the binding of the formylmethionine-tRNA to ribosomes. Seems to function along with eIF-2. The polypeptide is Probable translation initiation factor IF-2 (Methanococcus vannielii (strain ATCC 35089 / DSM 1224 / JCM 13029 / OCM 148 / SB)).